The following is a 562-amino-acid chain: IRK-interacting protein (562 aa).

Disordered stretches follow at residues 29–61 (ASLMQMKSSPSSNYSLRNPSSSSAASPASRPLP) and 303–322 (VVSQENSGGRSSGKKNSEMP). Positions 36–61 (SSPSSNYSLRNPSSSSAASPASRPLP) are enriched in low complexity. Residues 246-306 (SGVEKLKREL…LREATEVVSQ (61 aa)) are a coiled coil.

As to quaternary structure, interacts with IRK. As to expression, highly expressed in root tips, shoot apices and developing flowers.

In Arabidopsis thaliana (Mouse-ear cress), this protein is IRK-interacting protein.